Consider the following 2670-residue polypeptide: Inositol 1,4,5-trisphosphate-gated calcium channel ITPR3 (2670 aa).

Topologically, residues 1 to 2201 (MNEMSSFLHI…LIYWFSRRMT (2201 aa)) are cytoplasmic. 5 MIR domains span residues 113-173 (GDVV…LRSN), 174-224 (GDNV…INLF), 232-288 (EEVL…VEVV), 295-372 (GGAG…LDPT), and 378-434 (DSFV…IVSV). Residues Arg-266, Thr-268, Leu-269, and Arg-270 each coordinate 1D-myo-inositol 1,4,5-trisphosphate. The tract at residues 321–344 (PSYKGDVSDPKAAGPGAQSRTGRR) is disordered. 1D-myo-inositol 1,4,5-trisphosphate contacts are provided by Arg-503, Lys-507, Arg-510, Tyr-567, Arg-568, and Lys-569. Ca(2+) is bound at residue Arg-743. 2 positions are modified to phosphoserine: Ser-916 and Ser-934. The Ca(2+) site is built by Glu-1122 and Glu-1125. Positions 1134–1153 (VKGEEGEAGASKDKKERPSD) are enriched in basic and acidic residues. Disordered stretches follow at residues 1134-1164 (VKGE…HGEK) and 1807-1849 (NMSD…GLHR). 3 positions are modified to phosphoserine: Ser-1813, Ser-1832, and Ser-1834. Low complexity predominate over residues 1831–1842 (SSFSMPSSSRYS). Ca(2+) is bound by residues Glu-1881 and Glu-1945. Residues Ala-1995, Glu-2148, and Lys-2151 each contribute to the ATP site. The helical transmembrane segment at 2202–2222 (LWGSISFNLAVFINIIIAFFY) threads the bilayer. The Extracellular segment spans residues 2223–2233 (PYVEGASTGVL). The helical transmembrane segment at 2234–2254 (GSPLISLLFWILICFSIAALF) threads the bilayer. At 2255-2263 (TKHYSVRPL) the chain is on the cytoplasmic side. A helical transmembrane segment spans residues 2264–2284 (IVALVLRSIYYLGIGPTLNIL). The Extracellular portion of the chain corresponds to 2285 to 2324 (GALNLTNKIVFVVSFVGNRGTFIRGYKAMVMDMEFLYHVG). A helical membrane pass occupies residues 2325–2345 (YILTSVLGLFAHELFYSILLF). Residues 2346-2367 (DLIYREETLFNVIKSVTRNGRS) are Cytoplasmic-facing. The chain crosses the membrane as a helical span at residues 2368-2388 (ILLTALLALILVYLFSIVGFL). Residues 2389 to 2495 (FLKDDFILEV…ESLFPARVVY (107 aa)) are Extracellular-facing. Cys-2454 and Cys-2460 are oxidised to a cystine. The helical transmembrane segment at 2496 to 2516 (DLLFFFIVIIIVLNLIFGVII) threads the bilayer. Topologically, residues 2517–2670 (DTFADLRSEK…FVDVQNCMSR (154 aa)) are cytoplasmic. ATP-binding residues include Cys-2537 and Phe-2538. Cys-2537 lines the Zn(2+) pocket. The Zn(2+) site is built by Cys-2540 and His-2557. Residues Lys-2559, His-2562, Asn-2563, and Met-2564 each coordinate ATP. Residue His-2562 coordinates Zn(2+). Position 2580 (Thr-2580) interacts with Ca(2+). A phosphoserine mark is found at Ser-2608 and Ser-2669.

The protein belongs to the InsP3 receptor family. As to quaternary structure, homotetramer. Homodimer. Interacts with TRPC1 and TRPC3. Interacts with TRPC4. Interacts with TRPV4. Interacts with SIGMAR1. Interacts with AKT1 and PML. Interacts with IRAG2 (via coiled-coil domain). Interacts with CABP1. Interacts with TMBIM4/LFG4. Interacts with CEMIP. Interacts with TESPA1. Interacts with TMEM203. Interacts with BOK; regulates ITPR3 expression. Interacts with BCL2L10. Interacts with CHGA and CHGB. Phosphorylated by AKT1 on serine and/or threonine residues.

The protein resides in the endoplasmic reticulum membrane. Its subcellular location is the cytoplasmic vesicle. It is found in the secretory vesicle membrane. It carries out the reaction Ca(2+)(in) = Ca(2+)(out). Its activity is regulated as follows. Inositol 1,4,5-trisphosphate-gated calcium channel is regulated by cytosolic calcium in a biphasic manner. At low concentrations, cytosolic calcium binds at a high-affinity juxtamembrane domain (JD) calcium binding site, allowing ITPR3 to activate by escaping a low-energy resting state through an ensemble of preactivated states. At high cytosolic calcium concentrations, ITPR3 preferentially enters an inhibited state stabilized by calcium binding at a second, low-affinity cytoplasmic domain (CD) calcium binding site. Its function is as follows. Inositol 1,4,5-trisphosphate-gated calcium channel that, upon 1D-myo-inositol 1,4,5-trisphosphate binding, transports calcium from the endoplasmic reticulum lumen to cytoplasm, thus releasing the intracellular calcium and therefore participates in cellular calcium ion homeostasis. 11D-myo-inositol 1,4,5-trisphosphate binds to the ligand-free channel without altering its global conformation, yielding the low-energy resting state, then progresses through resting-to preactivated transitions to the higher energy preactivated state, which increases affinity for calcium, promoting binding of the low basal cytosolic calcium at the juxtamembrane domain (JD) site, favoring the transition through the ensemble of high-energy intermediate states along the trajectory to the fully-open activated state. Upon opening, releases calcium in the cytosol where it can bind to the low-affinity cytoplasmic domain (CD) site and stabilizes the inhibited state to terminate calcium release. The sequence is that of Inositol 1,4,5-trisphosphate-gated calcium channel ITPR3 from Rattus norvegicus (Rat).